A 157-amino-acid chain; its full sequence is 2-C-methyl-D-erythritol 2,4-cyclodiphosphate synthase (157 aa).

Residues aspartate 9 and histidine 11 each coordinate a divalent metal cation. 4-CDP-2-C-methyl-D-erythritol 2-phosphate is bound by residues 9-11 and 35-36; these read DVH and HS. A divalent metal cation is bound at residue histidine 43. Residues 57–59, 62–66, 133–136, phenylalanine 140, and lysine 143 each bind 4-CDP-2-C-methyl-D-erythritol 2-phosphate; these read DIG, FPETD, and TTME.

This sequence belongs to the IspF family. In terms of assembly, homotrimer. Requires a divalent metal cation as cofactor.

The enzyme catalyses 4-CDP-2-C-methyl-D-erythritol 2-phosphate = 2-C-methyl-D-erythritol 2,4-cyclic diphosphate + CMP. Its pathway is isoprenoid biosynthesis; isopentenyl diphosphate biosynthesis via DXP pathway; isopentenyl diphosphate from 1-deoxy-D-xylulose 5-phosphate: step 4/6. In terms of biological role, involved in the biosynthesis of isopentenyl diphosphate (IPP) and dimethylallyl diphosphate (DMAPP), two major building blocks of isoprenoid compounds. Catalyzes the conversion of 4-diphosphocytidyl-2-C-methyl-D-erythritol 2-phosphate (CDP-ME2P) to 2-C-methyl-D-erythritol 2,4-cyclodiphosphate (ME-CPP) with a corresponding release of cytidine 5-monophosphate (CMP). This is 2-C-methyl-D-erythritol 2,4-cyclodiphosphate synthase from Enterococcus faecalis (strain ATCC 700802 / V583).